Reading from the N-terminus, the 957-residue chain is Glycine dehydrogenase (decarboxylating) (957 aa).

Residue Lys-708 is modified to N6-(pyridoxal phosphate)lysine.

Belongs to the GcvP family. The glycine cleavage system is composed of four proteins: P, T, L and H. Pyridoxal 5'-phosphate serves as cofactor.

It catalyses the reaction N(6)-[(R)-lipoyl]-L-lysyl-[glycine-cleavage complex H protein] + glycine + H(+) = N(6)-[(R)-S(8)-aminomethyldihydrolipoyl]-L-lysyl-[glycine-cleavage complex H protein] + CO2. The glycine cleavage system catalyzes the degradation of glycine. The P protein binds the alpha-amino group of glycine through its pyridoxal phosphate cofactor; CO(2) is released and the remaining methylamine moiety is then transferred to the lipoamide cofactor of the H protein. The chain is Glycine dehydrogenase (decarboxylating) from Escherichia coli O81 (strain ED1a).